The chain runs to 513 residues: 2,3-bisphosphoglycerate-independent phosphoglycerate mutase (513 aa).

2 residues coordinate Mn(2+): Asp12 and Ser62. Ser62 (phosphoserine intermediate) is an active-site residue. Substrate is bound by residues His123, 153–154 (RD), Arg185, Arg191, 261–264 (RSDR), and Lys335. 5 residues coordinate Mn(2+): Asp402, His406, Asp443, His444, and His462.

It belongs to the BPG-independent phosphoglycerate mutase family. As to quaternary structure, monomer. The cofactor is Mn(2+).

It catalyses the reaction (2R)-2-phosphoglycerate = (2R)-3-phosphoglycerate. The protein operates within carbohydrate degradation; glycolysis; pyruvate from D-glyceraldehyde 3-phosphate: step 3/5. In terms of biological role, catalyzes the interconversion of 2-phosphoglycerate and 3-phosphoglycerate. This is 2,3-bisphosphoglycerate-independent phosphoglycerate mutase from Thiobacillus denitrificans (strain ATCC 25259 / T1).